The chain runs to 297 residues: Glycerol-3-phosphate dehydrogenase [NAD(P)+] (297 aa).

3 residues coordinate NADPH: tryptophan 11, arginine 33, and lysine 79. Positions 79, 107, and 109 each coordinate sn-glycerol 3-phosphate. Position 111 (alanine 111) interacts with NADPH. Residues lysine 161, aspartate 214, serine 224, arginine 225, and asparagine 226 each contribute to the sn-glycerol 3-phosphate site. Lysine 161 functions as the Proton acceptor in the catalytic mechanism. Arginine 225 contacts NADPH. Residues valine 249 and glutamate 251 each coordinate NADPH.

This sequence belongs to the NAD-dependent glycerol-3-phosphate dehydrogenase family.

It localises to the cytoplasm. It carries out the reaction sn-glycerol 3-phosphate + NAD(+) = dihydroxyacetone phosphate + NADH + H(+). The catalysed reaction is sn-glycerol 3-phosphate + NADP(+) = dihydroxyacetone phosphate + NADPH + H(+). The protein operates within membrane lipid metabolism; glycerophospholipid metabolism. Its function is as follows. Catalyzes the reduction of the glycolytic intermediate dihydroxyacetone phosphate (DHAP) to sn-glycerol 3-phosphate (G3P), the key precursor for phospholipid synthesis. The protein is Glycerol-3-phosphate dehydrogenase [NAD(P)+] of Campylobacter jejuni subsp. doylei (strain ATCC BAA-1458 / RM4099 / 269.97).